Consider the following 81-residue polypeptide: Photosystem I iron-sulfur center (81 aa).

4Fe-4S ferredoxin-type domains follow at residues 2-31 (SHSV…MIPW) and 39-68 (IASA…VRVY). Positions 11, 14, 17, 21, 48, 51, 54, and 58 each coordinate [4Fe-4S] cluster.

As to quaternary structure, the eukaryotic PSI reaction center is composed of at least 11 subunits. It depends on [4Fe-4S] cluster as a cofactor.

Its subcellular location is the plastid thylakoid membrane. It catalyses the reaction reduced [plastocyanin] + hnu + oxidized [2Fe-2S]-[ferredoxin] = oxidized [plastocyanin] + reduced [2Fe-2S]-[ferredoxin]. Apoprotein for the two 4Fe-4S centers FA and FB of photosystem I (PSI); essential for photochemical activity. FB is the terminal electron acceptor of PSI, donating electrons to ferredoxin. The C-terminus interacts with PsaA/B/D and helps assemble the protein into the PSI complex. Required for binding of PsaD and PsaE to PSI. PSI is a plastocyanin-ferredoxin oxidoreductase, converting photonic excitation into a charge separation, which transfers an electron from the donor P700 chlorophyll pair to the spectroscopically characterized acceptors A0, A1, FX, FA and FB in turn. The polypeptide is Photosystem I iron-sulfur center (Cuscuta obtusiflora (Peruvian dodder)).